The primary structure comprises 83 residues: Small ribosomal subunit protein uS17 (83 aa).

This sequence belongs to the universal ribosomal protein uS17 family. In terms of assembly, part of the 30S ribosomal subunit.

In terms of biological role, one of the primary rRNA binding proteins, it binds specifically to the 5'-end of 16S ribosomal RNA. In Aliarcobacter butzleri (strain RM4018) (Arcobacter butzleri), this protein is Small ribosomal subunit protein uS17.